A 280-amino-acid chain; its full sequence is Adenosylcobinamide-GDP ribazoletransferase (280 aa).

Transmembrane regions (helical) follow at residues 4–24 (YLLAFKSGFGFLSTIPVGISM), 39–59 (VVGAVLGLLIGAVAFIGQVIF), 61–81 (GPVLAALLMGFIYYITGFNHL), 108–128 (TIGTGGVSFCILLLLTLYGSI), 196–216 (FLIGFVFGAIVCFLPFGWIGL), and 255–275 (TALIILAVLLQLSLNGYMGGF).

Belongs to the CobS family. It depends on Mg(2+) as a cofactor.

Its subcellular location is the cell membrane. It catalyses the reaction alpha-ribazole + adenosylcob(III)inamide-GDP = adenosylcob(III)alamin + GMP + H(+). The catalysed reaction is alpha-ribazole 5'-phosphate + adenosylcob(III)inamide-GDP = adenosylcob(III)alamin 5'-phosphate + GMP + H(+). The protein operates within cofactor biosynthesis; adenosylcobalamin biosynthesis; adenosylcobalamin from cob(II)yrinate a,c-diamide: step 7/7. Joins adenosylcobinamide-GDP and alpha-ribazole to generate adenosylcobalamin (Ado-cobalamin). Also synthesizes adenosylcobalamin 5'-phosphate from adenosylcobinamide-GDP and alpha-ribazole 5'-phosphate. In Methanosarcina barkeri (strain Fusaro / DSM 804), this protein is Adenosylcobinamide-GDP ribazoletransferase.